We begin with the raw amino-acid sequence, 223 residues long: Cytidylate kinase (223 aa).

17 to 25 (GPTASGKGT) lines the ATP pocket.

It belongs to the cytidylate kinase family. Type 1 subfamily.

It is found in the cytoplasm. The catalysed reaction is CMP + ATP = CDP + ADP. It carries out the reaction dCMP + ATP = dCDP + ADP. This chain is Cytidylate kinase, found in Bordetella pertussis (strain Tohama I / ATCC BAA-589 / NCTC 13251).